A 239-amino-acid chain; its full sequence is LexA repressor (239 aa).

A DNA-binding region (H-T-H motif) is located at residues 26 to 46 (FDEMKDALDLASKSGIHRLIT). The disordered stretch occupies residues 84–107 (SPSVIEGSLGKPQPVATPAPAKSV). Catalysis depends on for autocatalytic cleavage activity residues S159 and K197.

The protein belongs to the peptidase S24 family. Homodimer.

It carries out the reaction Hydrolysis of Ala-|-Gly bond in repressor LexA.. Its function is as follows. Represses a number of genes involved in the response to DNA damage (SOS response), including recA and lexA. In the presence of single-stranded DNA, RecA interacts with LexA causing an autocatalytic cleavage which disrupts the DNA-binding part of LexA, leading to derepression of the SOS regulon and eventually DNA repair. This is LexA repressor from Rhizobium johnstonii (strain DSM 114642 / LMG 32736 / 3841) (Rhizobium leguminosarum bv. viciae).